Here is a 199-residue protein sequence, read N- to C-terminus: Calcium-binding protein CAST (199 aa).

The segment covering 1 to 13 (MGSVQDENKDEFK) has biased composition (basic and acidic residues). Residues 1 to 31 (MGSVQDENKDEFKQSLTRGKLKPSSSSSFRL) are disordered. 4 EF-hand domains span residues 36–71 (LNSIRLRRIFDVFDRNHDCLISVEELSQALNLLGLD), 75–110 (SEIESMVKLHIKPENTGLRFEDFETLHRSLNDVFFG), 125–160 (QDESDLKEAFDVFDENGDGFISAKELQVVLEKLGLP), and 163–198 (SEIDRVEMMISSVEQDHDGRVDFFEFKDMMRTVIVP). Positions 49, 51, 53, and 60 each coordinate Ca(2+). Ca(2+) contacts are provided by Asp138, Asn140, Asp142, Glu149, Asp178, Asp180, Arg182, and Glu187.

Functionally, not known. Probably binds 3 calcium ions. The protein is Calcium-binding protein CAST of Solanum tuberosum (Potato).